Here is a 260-residue protein sequence, read N- to C-terminus: Uroplakin-1b (260 aa).

The Cytoplasmic segment spans residues 1-15 (MAKDDSTVRCFQGLL). Residues 16–36 (IFGHVIVGMCGIALTAECIFF) traverse the membrane as a helical segment. The Extracellular portion of the chain corresponds to 37–59 (VSDQHSLYPLLEATNNDDIFGAA). A helical membrane pass occupies residues 60 to 80 (WIGMFVGICLFCLSVLAIVGI). Residues 81-86 (MKSNRK) lie on the Cytoplasmic side of the membrane. The chain crosses the membrane as a helical span at residues 87–107 (ILLAYFIMMFIVYGFEVASCI). Over 108 to 229 (TAATQRDFFT…ELISGPMDRH (122 aa)) the chain is Extracellular. A helical transmembrane segment spans residues 230 to 250 (AWGVAWFGFAILCWTFWVLLG). At 251–260 (TMFYWSRIEY) the chain is on the cytoplasmic side.

This sequence belongs to the tetraspanin (TM4SF) family. Heterodimer with uroplakin-3A (UPK3A) or uroplakin-3B (UPK3B). In terms of processing, N-glycosylated with high-mannose oligosaccharides. As to expression, bladder epithelium.

Its subcellular location is the membrane. Component of the asymmetric unit membrane (AUM); a highly specialized biomembrane elaborated by terminally differentiated urothelial cells. May play an important role in normal bladder epithelial physiology, possibly in regulating membrane permeability of superficial umbrella cells or in stabilizing the apical membrane through AUM/cytoskeletal interactions. This Mus musculus (Mouse) protein is Uroplakin-1b (Upk1b).